Reading from the N-terminus, the 209-residue chain is Ribonuclease HII (209 aa).

The RNase H type-2 domain occupies 18–209 (GLVAGVDEVG…FKPVKALLER (192 aa)). Positions 24, 25, and 116 each coordinate a divalent metal cation.

It belongs to the RNase HII family. Requires Mn(2+) as cofactor. Mg(2+) is required as a cofactor.

Its subcellular location is the cytoplasm. It carries out the reaction Endonucleolytic cleavage to 5'-phosphomonoester.. Functionally, endonuclease that specifically degrades the RNA of RNA-DNA hybrids. The chain is Ribonuclease HII from Shewanella sp. (strain ANA-3).